The sequence spans 512 residues: uncharacterized protein (512 aa).

The N-terminal stretch at 1–22 (MVSSLIYSLCAVSGLLATTVNG) is a signal peptide. N-linked (GlcNAc...) asparagine glycosylation occurs at Asn-167. Residues 251–282 (SAASPPIYEPDRQTDPEDPETGRNNNQGFEGL) are disordered.

Its subcellular location is the secreted. This is an uncharacterized protein from Arthroderma benhamiae (strain ATCC MYA-4681 / CBS 112371) (Trichophyton mentagrophytes).